The following is a 205-amino-acid chain: Small ribosomal subunit protein uS4 (205 aa).

Positions 18–46 (NIWGRPKSPVNRREYGPGQHGQRRKGKLS) are disordered. The region spanning 94-154 (RRLDTVVFRA…EASKQLAVVL (61 aa)) is the S4 RNA-binding domain.

It belongs to the universal ribosomal protein uS4 family. Part of the 30S ribosomal subunit. Contacts protein S5. The interaction surface between S4 and S5 is involved in control of translational fidelity.

In terms of biological role, one of the primary rRNA binding proteins, it binds directly to 16S rRNA where it nucleates assembly of the body of the 30S subunit. Functionally, with S5 and S12 plays an important role in translational accuracy. This is Small ribosomal subunit protein uS4 from Bradyrhizobium sp. (strain ORS 278).